Consider the following 158-residue polypeptide: S-ribosylhomocysteine lyase (158 aa).

Fe cation-binding residues include H54, H58, and C124.

It belongs to the LuxS family. As to quaternary structure, homodimer. The cofactor is Fe cation.

The catalysed reaction is S-(5-deoxy-D-ribos-5-yl)-L-homocysteine = (S)-4,5-dihydroxypentane-2,3-dione + L-homocysteine. Its function is as follows. Involved in the synthesis of autoinducer 2 (AI-2) which is secreted by bacteria and is used to communicate both the cell density and the metabolic potential of the environment. The regulation of gene expression in response to changes in cell density is called quorum sensing. Catalyzes the transformation of S-ribosylhomocysteine (RHC) to homocysteine (HC) and 4,5-dihydroxy-2,3-pentadione (DPD). The polypeptide is S-ribosylhomocysteine lyase (Lactobacillus johnsonii (strain CNCM I-12250 / La1 / NCC 533)).